We begin with the raw amino-acid sequence, 935 residues long: Lon protease homolog 2, peroxisomal (935 aa).

In terms of domain architecture, Lon N-terminal spans Leu12–Gly296. An ATP-binding site is contributed by Gly452–Thr459. Positions Gln692–Gly922 constitute a Lon proteolytic domain. Residues Ser789 and Lys832 contribute to the active site. The Microbody targeting signal motif lies at Ala933 to Ile935.

Belongs to the peptidase S16 family.

The protein resides in the peroxisome matrix. It catalyses the reaction Hydrolysis of proteins in presence of ATP.. Its function is as follows. ATP-dependent serine protease that mediates the selective degradation of misfolded and unassembled polypeptides in the peroxisomal matrix. Necessary for type 2 peroxisome targeting signal (PTS2)-containing protein processing and facilitates peroxisome matrix protein import. The chain is Lon protease homolog 2, peroxisomal (PLN) from Pichia angusta (Yeast).